The primary structure comprises 472 residues: Spliceosome-associated protein CWC27 homolog (472 aa).

Residue S2 is modified to N-acetylserine. Residues 11-166 form the PPIase cyclophilin-type domain; sequence TNGKVLLKTT…NPHKIKSCEV (156 aa). 2 N-linked (GlcNAc...) asparagine glycosylation sites follow: N109 and N201. Residues 206–230 are a coiled coil; it reads SFGEEAEEEEEEVNRVSQSMKGKSK. Disordered stretches follow at residues 206–386 and 398–472; these read SFGE…DQTL and QAIA…KERR. Over residues 231-241 the composition is skewed to basic and acidic residues; it reads SSHDLLKDDPH. Positions 257 to 268 are enriched in acidic residues; the sequence is DLVDDGEDESAE. Composition is skewed to basic and acidic residues over residues 269–286, 304–347, and 359–371; these read HDEYIDGDEKNLMRERIA, EVEK…KRSE, and EYRREKQKYEALR. Positions 306–377 form a coiled coil; sequence EKKSVSRSEE…EALRKQQSKK (72 aa). The residue at position 346 (S346) is a Phosphoserine. The segment covering 404–418 has biased composition (acidic residues); that stretch reads PENDIPETEVEDDEG. 2 stretches are compositionally biased toward basic and acidic residues: residues 425-437 and 457-472; these read QFEDKSRKVKDAS and RREESKKLMREKKERR.

This sequence belongs to the cyclophilin-type PPIase family. As to quaternary structure, part of the activated spliceosome B/catalytic step 1 spliceosome, one of the forms of the spliceosome which has a well-formed active site but still cannot catalyze the branching reaction and is composed at least of 52 proteins, the U2, U5 and U6 snRNAs and the pre-mRNA. Recruited during early steps of activated spliceosome B maturation, it is probably one of the first proteins released from this complex as he matures to the spliceosome C complex. Component of the minor spliceosome, which splices U12-type introns.

It is found in the nucleus. As part of the spliceosome, plays a role in pre-mRNA splicing. Probable inactive PPIase with no peptidyl-prolyl cis-trans isomerase activity. As a component of the minor spliceosome, involved in the splicing of U12-type introns in pre-mRNAs. The sequence is that of Spliceosome-associated protein CWC27 homolog from Homo sapiens (Human).